The primary structure comprises 250 residues: Flavin-dependent thymidylate synthase (250 aa).

One can recognise a ThyX domain in the interval 7 to 233 (LRVQLIAKTD…PSIFGDFDIA (227 aa)). FAD contacts are provided by residues S71, 95-97 (RHR), and Q103. DUMP is bound by residues 92-95 (ELIR), 103-107 (QLSQR), and R172. The ThyX motif motif lies at 95–105 (RHRHFSYSQLS). Residues 188 to 190 (NYR) and H194 contribute to the FAD site. DUMP is bound at residue R199. The active-site Involved in ionization of N3 of dUMP, leading to its activation is the R199.

It belongs to the thymidylate synthase ThyX family. In terms of assembly, homotetramer. FAD is required as a cofactor.

The catalysed reaction is dUMP + (6R)-5,10-methylene-5,6,7,8-tetrahydrofolate + NADPH + H(+) = dTMP + (6S)-5,6,7,8-tetrahydrofolate + NADP(+). It participates in pyrimidine metabolism; dTTP biosynthesis. In terms of biological role, catalyzes the reductive methylation of 2'-deoxyuridine-5'-monophosphate (dUMP) to 2'-deoxythymidine-5'-monophosphate (dTMP) while utilizing 5,10-methylenetetrahydrofolate (mTHF) as the methyl donor, and NADPH and FADH(2) as the reductant. The polypeptide is Flavin-dependent thymidylate synthase (Mycobacteroides abscessus (strain ATCC 19977 / DSM 44196 / CCUG 20993 / CIP 104536 / JCM 13569 / NCTC 13031 / TMC 1543 / L948) (Mycobacterium abscessus)).